We begin with the raw amino-acid sequence, 225 residues long: Thaumatin-like protein (225 aa).

The signal sequence occupies residues M1 to G24. 8 disulfides stabilise this stretch: C33–C224, C74–C84, C89–C95, C140–C213, C146–C196, C154–C164, C168–C177, and C178–C183. N-linked (GlcNAc...) asparagine glycosylation occurs at N187.

This sequence belongs to the thaumatin family. N-glycosylated. Woody stem plug.

The protein localises to the secreted. Functionally, has antifungal activity. This chain is Thaumatin-like protein (tlp), found in Actinidia deliciosa (Kiwi).